A 412-amino-acid chain; its full sequence is NADH-quinone oxidoreductase subunit D (412 aa).

This sequence belongs to the complex I 49 kDa subunit family. NDH-1 is composed of 14 different subunits. Subunits NuoB, C, D, E, F, and G constitute the peripheral sector of the complex.

The protein localises to the cell inner membrane. It carries out the reaction a quinone + NADH + 5 H(+)(in) = a quinol + NAD(+) + 4 H(+)(out). In terms of biological role, NDH-1 shuttles electrons from NADH, via FMN and iron-sulfur (Fe-S) centers, to quinones in the respiratory chain. The immediate electron acceptor for the enzyme in this species is believed to be ubiquinone. Couples the redox reaction to proton translocation (for every two electrons transferred, four hydrogen ions are translocated across the cytoplasmic membrane), and thus conserves the redox energy in a proton gradient. This is NADH-quinone oxidoreductase subunit D from Sulfurimonas denitrificans (strain ATCC 33889 / DSM 1251) (Thiomicrospira denitrificans (strain ATCC 33889 / DSM 1251)).